Reading from the N-terminus, the 65-residue chain is Large ribosomal subunit protein bL35 (65 aa).

The segment at Met1–Gln26 is disordered.

The protein belongs to the bacterial ribosomal protein bL35 family.

The chain is Large ribosomal subunit protein bL35 from Idiomarina loihiensis (strain ATCC BAA-735 / DSM 15497 / L2-TR).